The primary structure comprises 373 residues: MSFSVQETLFSLLQHNAISGHENAVADVMLCEFRRQAKEVWRDRLGNVVARYGSDKPDALRLMIFAHMDEVGFMVRKIEPSGFLRFERVGGPAQVTMAGSIVTLTGDKGPVMGCIGIKSYHFAKGDERTQSPSVDKLWIDIGAKDKDDAIRMGIQVGTPVTLYNPPQLLANDLVCSKALDDRLGCTALLGVADAISTMELDIAVYLVASVQEEFNIRGIVPVLRRVKPDLAIGIDITPSCDTPDLHDYSEVRINQGVGITCLNYHGRGTLAGLITPPRLIRMLEQTALEHNIPVQREVAPGVITETGYIQVEQDGIPCASLSIPCRYTHSPAEVASLRDLTDCIRLLTALAGMSAAHFPVEPDSGTTQEAHPL.

A divalent metal cation contacts are provided by H67 and D180. The Proton acceptor role is filled by E212. Positions 213, 235, and 329 each coordinate a divalent metal cation.

It belongs to the peptidase M42 family. Requires a divalent metal cation as cofactor.

In Escherichia coli (strain K12), this protein is Putative aminopeptidase SgcX (sgcX).